The chain runs to 336 residues: 4-aminobenzoate N-oxygenase (336 aa).

4-nitrobenzoate is bound at residue tyrosine 93. Residues glutamate 101, glutamate 136, histidine 139, and glutamate 196 each coordinate Fe cation. Asparagine 200 lines the 4-nitrobenzoate pocket. Fe cation is bound by residues histidine 223, glutamate 227, and histidine 230.

Belongs to the AurF N-oxygenase family. Homodimer. Fe(2+) serves as cofactor.

It carries out the reaction 4-aminobenzoate + AH2 + 2 O2 = 4-nitrobenzoate + A + 2 H2O. It functions in the pathway antibiotic biosynthesis. Involved in the biosynthesis of the polyketide antibiotic aureothin. Catalyzes the oxidation of p-aminobenzoate (pABA) to p-nitrobenzoate (pNBA), an unusual polyketide synthase starter unit. Reaction mechanism involves the generation of a peroxodiiron(III/III) intermediate, which effects the initial oxidation of p-aminobenzoate to p-hydroxylaminobenzoate (Ar-NHOH). Ar-NHOH is then probably directly converted to the fully oxidized p-nitrobenzoate via a four-electron N-oxidation, bypassing the formation of a nitroso compound. The sequence is that of 4-aminobenzoate N-oxygenase from Streptomyces thioluteus.